The chain runs to 204 residues: Imidazoleglycerol-phosphate dehydratase (204 aa).

This sequence belongs to the imidazoleglycerol-phosphate dehydratase family.

It is found in the cytoplasm. The catalysed reaction is D-erythro-1-(imidazol-4-yl)glycerol 3-phosphate = 3-(imidazol-4-yl)-2-oxopropyl phosphate + H2O. It functions in the pathway amino-acid biosynthesis; L-histidine biosynthesis; L-histidine from 5-phospho-alpha-D-ribose 1-diphosphate: step 6/9. This Corynebacterium jeikeium (strain K411) protein is Imidazoleglycerol-phosphate dehydratase.